The primary structure comprises 368 residues: 3-dehydroquinate synthase (368 aa).

Residues 112 to 116, 136 to 137, lysine 149, lysine 158, and 176 to 179 each bind NAD(+); these read GVIGD, TT, and TLIT. Residues glutamate 191, histidine 256, and histidine 273 each contribute to the Zn(2+) site.

It belongs to the sugar phosphate cyclases superfamily. Dehydroquinate synthase family. Requires Co(2+) as cofactor. It depends on Zn(2+) as a cofactor. NAD(+) is required as a cofactor.

It is found in the cytoplasm. The enzyme catalyses 7-phospho-2-dehydro-3-deoxy-D-arabino-heptonate = 3-dehydroquinate + phosphate. It functions in the pathway metabolic intermediate biosynthesis; chorismate biosynthesis; chorismate from D-erythrose 4-phosphate and phosphoenolpyruvate: step 2/7. In terms of biological role, catalyzes the conversion of 3-deoxy-D-arabino-heptulosonate 7-phosphate (DAHP) to dehydroquinate (DHQ). The chain is 3-dehydroquinate synthase from Prochlorococcus marinus (strain NATL2A).